A 38-amino-acid polypeptide reads, in one-letter code: Large ribosomal subunit protein bL12 (38 aa).

The protein belongs to the bacterial ribosomal protein bL12 family. Homodimer. Part of the ribosomal stalk of the 50S ribosomal subunit. Forms a multimeric L10(L12)X complex, where L10 forms an elongated spine to which 2 to 4 L12 dimers bind in a sequential fashion. Binds GTP-bound translation factors.

In terms of biological role, forms part of the ribosomal stalk which helps the ribosome interact with GTP-bound translation factors. Is thus essential for accurate translation. In Salinivibrio costicola (Vibrio costicola), this protein is Large ribosomal subunit protein bL12 (rplL).